We begin with the raw amino-acid sequence, 173 residues long: RNA polymerase sigma factor TcsR (173 aa).

The tract at residues 122–169 (IKDLTQNEKNIIRKIYLDRLRESEISRELNISRQAVNKTHLRALEKLK) is sigma-70 factor domain-4. Residues 143 to 162 (ESEISRELNISRQAVNKTHL) constitute a DNA-binding region (H-T-H motif).

Belongs to the sigma-70 factor family.

Sigma factors are initiation factors that promote the attachment of RNA polymerase to specific initiation sites and are then released. Transcriptional regulator specifically required to activate expression of the toxin gene locus, composed of tcsL, tcsH and tcdE/utxA. The sequence is that of RNA polymerase sigma factor TcsR from Paraclostridium sordellii (Clostridium sordellii).